The primary structure comprises 226 residues: Glutathione peroxidase 3 (226 aa).

The N-terminal stretch at 1-24 (MARLLQASCLLSLLLAGFVPQSRG) is a signal peptide. Sec73 is an active-site residue. A non-standard amino acid (selenocysteine) is located at residue Sec73.

Belongs to the glutathione peroxidase family. Homotetramer. As to expression, secreted in plasma.

It is found in the secreted. It catalyses the reaction 2 glutathione + H2O2 = glutathione disulfide + 2 H2O. The enzyme catalyses tert-butyl hydroperoxide + 2 glutathione = tert-butanol + glutathione disulfide + H2O. In terms of biological role, protects cells and enzymes from oxidative damage, by catalyzing the reduction of hydrogen peroxide, lipid peroxides and organic hydroperoxide, by glutathione. In Hylobates lar (Lar gibbon), this protein is Glutathione peroxidase 3.